The sequence spans 155 residues: Transcriptional regulator MraZ (155 aa).

SpoVT-AbrB domains are found at residues 7 to 54 (TYEC…PMEE) and 83 to 126 (VKTV…DKDK).

This sequence belongs to the MraZ family. Forms oligomers.

The protein localises to the cytoplasm. It localises to the nucleoid. This chain is Transcriptional regulator MraZ, found in Christiangramia forsetii (strain DSM 17595 / CGMCC 1.15422 / KT0803) (Gramella forsetii).